The following is a 642-amino-acid chain: Threonine--tRNA ligase (642 aa).

The region spanning 1–61 is the TGS domain; that stretch reads MPVIRFYDGS…REDAFIEFVD (61 aa). Residues 243–534 form a catalytic region; the sequence is DHRKIGKFLQ…LIEECSGNLP (292 aa). Positions 334, 385, and 511 each coordinate Zn(2+).

Belongs to the class-II aminoacyl-tRNA synthetase family. Homodimer. The cofactor is Zn(2+).

Its subcellular location is the cytoplasm. The enzyme catalyses tRNA(Thr) + L-threonine + ATP = L-threonyl-tRNA(Thr) + AMP + diphosphate + H(+). Its function is as follows. Catalyzes the attachment of threonine to tRNA(Thr) in a two-step reaction: L-threonine is first activated by ATP to form Thr-AMP and then transferred to the acceptor end of tRNA(Thr). Also edits incorrectly charged L-seryl-tRNA(Thr). The chain is Threonine--tRNA ligase from Buchnera aphidicola subsp. Acyrthosiphon pisum (strain 5A).